The chain runs to 206 residues: Ribosomal RNA small subunit methyltransferase G (206 aa).

Residues Gly73, Leu78, 124 to 125 (VE), and Arg139 contribute to the S-adenosyl-L-methionine site.

The protein belongs to the methyltransferase superfamily. RNA methyltransferase RsmG family.

Its subcellular location is the cytoplasm. It carries out the reaction guanosine(527) in 16S rRNA + S-adenosyl-L-methionine = N(7)-methylguanosine(527) in 16S rRNA + S-adenosyl-L-homocysteine. Its function is as follows. Specifically methylates the N7 position of guanine in position 527 of 16S rRNA. This chain is Ribosomal RNA small subunit methyltransferase G, found in Photorhabdus laumondii subsp. laumondii (strain DSM 15139 / CIP 105565 / TT01) (Photorhabdus luminescens subsp. laumondii).